Here is a 341-residue protein sequence, read N- to C-terminus: Phenylalanine--tRNA ligase alpha subunit (341 aa).

Glu-252 is a Mg(2+) binding site.

Belongs to the class-II aminoacyl-tRNA synthetase family. Phe-tRNA synthetase alpha subunit type 1 subfamily. Tetramer of two alpha and two beta subunits. The cofactor is Mg(2+).

It localises to the cytoplasm. The catalysed reaction is tRNA(Phe) + L-phenylalanine + ATP = L-phenylalanyl-tRNA(Phe) + AMP + diphosphate + H(+). The polypeptide is Phenylalanine--tRNA ligase alpha subunit (Malacoplasma penetrans (strain HF-2) (Mycoplasma penetrans)).